The primary structure comprises 136 residues: Histone H3.2 (136 aa).

Residues 1 to 43 (MARTKQTARKSTGGKAPRKQLATKAARKSAPATGGVKKPHRFR) form a disordered region. K5 is modified (N6-methylated lysine). K10 is modified (N6-acetyllysine; alternate). Position 10 is an N6-methylated lysine; alternate (K10). S11 is modified (phosphoserine). T12 is modified (phosphothreonine). Residue K15 is modified to N6-acetyllysine. 2 positions are modified to N6-acetyllysine; alternate: K19 and K24. N6-methylated lysine; alternate occurs at positions 19 and 24. K28 bears the N6-methylated lysine mark. S29 bears the Phosphoserine mark. K37 carries the post-translational modification N6-methylated lysine.

Belongs to the histone H3 family. In terms of assembly, the nucleosome is a histone octamer containing two molecules each of H2A, H2B, H3 and H4 assembled in one H3-H4 heterotetramer and two H2A-H2B heterodimers. The octamer wraps approximately 147 bp of DNA. Acetylation is generally linked to gene activation. Can be acetylated to form H3K9ac, H3K14ac, H3K18ac and H3K23ac. H3K9ac could compete with H3K9me and prevent gene silencing. H3K9ac is restricted to euchromatin. Post-translationally, methylated to form mainly H3K4me, H3K9me, H3K18me, H3K23me, H3K27me and H3K36me. H3K4me1/2/3, H3K9me3, H3K27me3 and H3K36me1/2/3 are typical marks for euchromatin, whereas heterochromatic chromocenters are enriched in H3K9me1/2 and H3K27me1/2. H2BK143ub1 is probably prerequisite for H3K4me. In terms of processing, can be phosphorylated to form H3S10ph, H3T11ph and H3S28ph. As to expression, expressed in bicellular pollen, root tips, shoot apices, young leaves and ovules.

It localises to the nucleus. Its subcellular location is the nucleolus. It is found in the chromosome. Functionally, core component of nucleosome. Nucleosomes wrap and compact DNA into chromatin, limiting DNA accessibility to the cellular machineries which require DNA as a template. Histones thereby play a central role in transcription regulation, DNA repair, DNA replication and chromosomal stability. DNA accessibility is regulated via a complex set of post-translational modifications of histones, also called histone code, and nucleosome remodeling. The sequence is that of Histone H3.2 (YAH3) from Lilium longiflorum (Trumpet lily).